The chain runs to 302 residues: tRNA-cytidine(32) 2-sulfurtransferase (302 aa).

A PP-loop motif motif is present at residues 44–49 (SGGKDS). [4Fe-4S] cluster contacts are provided by C119, C122, and C210.

This sequence belongs to the TtcA family. In terms of assembly, homodimer. It depends on Mg(2+) as a cofactor. [4Fe-4S] cluster is required as a cofactor.

The protein resides in the cytoplasm. It carries out the reaction cytidine(32) in tRNA + S-sulfanyl-L-cysteinyl-[cysteine desulfurase] + AH2 + ATP = 2-thiocytidine(32) in tRNA + L-cysteinyl-[cysteine desulfurase] + A + AMP + diphosphate + H(+). Its pathway is tRNA modification. In terms of biological role, catalyzes the ATP-dependent 2-thiolation of cytidine in position 32 of tRNA, to form 2-thiocytidine (s(2)C32). The sulfur atoms are provided by the cysteine/cysteine desulfurase (IscS) system. The protein is tRNA-cytidine(32) 2-sulfurtransferase of Teredinibacter turnerae (strain ATCC 39867 / T7901).